A 106-amino-acid polypeptide reads, in one-letter code: Pyrimidine/purine nucleoside phosphorylase (106 aa).

Belongs to the nucleoside phosphorylase PpnP family.

The catalysed reaction is a purine D-ribonucleoside + phosphate = a purine nucleobase + alpha-D-ribose 1-phosphate. The enzyme catalyses adenosine + phosphate = alpha-D-ribose 1-phosphate + adenine. It catalyses the reaction cytidine + phosphate = cytosine + alpha-D-ribose 1-phosphate. It carries out the reaction guanosine + phosphate = alpha-D-ribose 1-phosphate + guanine. The catalysed reaction is inosine + phosphate = alpha-D-ribose 1-phosphate + hypoxanthine. The enzyme catalyses thymidine + phosphate = 2-deoxy-alpha-D-ribose 1-phosphate + thymine. It catalyses the reaction uridine + phosphate = alpha-D-ribose 1-phosphate + uracil. It carries out the reaction xanthosine + phosphate = alpha-D-ribose 1-phosphate + xanthine. Its function is as follows. Catalyzes the phosphorolysis of diverse nucleosides, yielding D-ribose 1-phosphate and the respective free bases. Can use uridine, adenosine, guanosine, cytidine, thymidine, inosine and xanthosine as substrates. Also catalyzes the reverse reactions. This Burkholderia ambifaria (strain MC40-6) protein is Pyrimidine/purine nucleoside phosphorylase.